Consider the following 740-residue polypeptide: Ion-translocating oxidoreductase complex subunit C (740 aa).

2 consecutive 4Fe-4S ferredoxin-type domains span residues 369–397 (GEPQ…QQLY) and 407–436 (KATT…VQYF). The [4Fe-4S] cluster site is built by C377, C380, C383, C387, C416, C419, C422, and C426. A disordered region spans residues 602–717 (KLEQQQANAE…PEEQVDPRKA (116 aa)). 2 stretches are compositionally biased toward low complexity: residues 605 to 615 (QQQANAEPEQQ) and 637 to 647 (QQQANAEPEQQ).

The protein belongs to the 4Fe4S bacterial-type ferredoxin family. RnfC subfamily. The complex is composed of six subunits: RsxA, RsxB, RsxC, RsxD, RsxE and RsxG. The cofactor is [4Fe-4S] cluster.

The protein localises to the cell inner membrane. Part of a membrane-bound complex that couples electron transfer with translocation of ions across the membrane. Required to maintain the reduced state of SoxR. The sequence is that of Ion-translocating oxidoreductase complex subunit C from Escherichia coli (strain ATCC 8739 / DSM 1576 / NBRC 3972 / NCIMB 8545 / WDCM 00012 / Crooks).